The sequence spans 617 residues: Hemagglutinin glycoprotein (617 aa).

Residues methionine 1 to valine 37 are Intravirion-facing. A stalk region spans residues methionine 1 to cysteine 154. Residues leucine 38–isoleucine 58 form a helical; Signal-anchor for type II membrane protein membrane-spanning segment. The Virion surface segment spans residues arginine 59–arginine 617. 5 N-linked (GlcNAc...) asparagine; by host glycosylation sites follow: asparagine 168, asparagine 187, asparagine 200, asparagine 215, and asparagine 238. Disulfide bonds link cysteine 188–cysteine 606, cysteine 287–cysteine 300, cysteine 381–cysteine 494, cysteine 386–cysteine 394, and cysteine 570–cysteine 579. Positions proline 458 to tyrosine 543 are interaction with host NECTIN4 receptor.

This sequence belongs to the paramyxoviruses hemagglutinin-neuraminidase family. Non-sialidase subfamily. Homodimer; disulfide-linked. Further forms homotetramer (dimer of dimers). Interacts (via C-terminus) with human NECTIN4 (via N-terminus); this interaction allows attachment to the respiratory epithelium and viral entry. Interacts (via C-terminus) with human SLAMF1/CD150 (via N-terminus); this interaction allows attachment and viral entry into the CD150-expressing immune cells. Interacts with human CD46 antigen (via N-terminus); this interaction allows attachment and viral entry of vaccine and laboratory-adapted strains.

It is found in the virion membrane. Its subcellular location is the host cell membrane. Functionally, attaches the virus to the human SLAMF1/CD150 receptor for entry into host dendritic cells, macrophages, activated memory T cells and naive or memory B cells, thereby explaining the long immunosuppression that follows infection. In the respiratory airways, binds to the NECTIN4 receptor for entry into the host cell. Binding of H protein to the receptor induces a conformational change that allows the F protein to trigger virion/cell membranes fusion. The vaccine and laboratory-adapted strains use host CD46 as an alternate receptor. The high degree of interaction between H and CD46 results in down-regulation of the latter from the surface of infected cells, rendering them more sensitive to c3b-mediated complement lysis. This chain is Hemagglutinin glycoprotein (H), found in Measles virus (strain Edmonston) (MeV).